The following is a 527-amino-acid chain: GMP synthase [glutamine-hydrolyzing] (527 aa).

Residues 4–202 enclose the Glutamine amidotransferase type-1 domain; that stretch reads KILILDFGSQ…VLKICGAQPD (199 aa). Cys81 acts as the Nucleophile in catalysis. Catalysis depends on residues His176 and Glu178. The GMPS ATP-PPase domain occupies 203–395; sequence WEMGHYIDEA…LGLPPAMVYR (193 aa). An ATP-binding site is contributed by 230–236; that stretch reads SGGVDSS.

In terms of assembly, homodimer.

It carries out the reaction XMP + L-glutamine + ATP + H2O = GMP + L-glutamate + AMP + diphosphate + 2 H(+). Its pathway is purine metabolism; GMP biosynthesis; GMP from XMP (L-Gln route): step 1/1. In terms of biological role, catalyzes the synthesis of GMP from XMP. The polypeptide is GMP synthase [glutamine-hydrolyzing] (Paraburkholderia xenovorans (strain LB400)).